We begin with the raw amino-acid sequence, 117 residues long: Pancreatic progenitor cell differentiation and proliferation factor A (117 aa).

A disordered region spans residues 22–46; the sequence is GSTSSNSSCSSSEYTGEVIPHPPGL. Residues 23–33 are compositionally biased toward low complexity; sequence STSSNSSCSSS.

This sequence belongs to the PPDPF family. In terms of tissue distribution, expressed exclusively in the exocrine cells during pancreas development.

Its function is as follows. Probable regulator of exocrine pancreas development. This chain is Pancreatic progenitor cell differentiation and proliferation factor A (ppdpfa), found in Danio rerio (Zebrafish).